The primary structure comprises 994 residues: Glycine dehydrogenase (decarboxylating) (994 aa).

The disordered stretch occupies residues Met-1 to Arg-20. Lys-716 carries the N6-(pyridoxal phosphate)lysine modification.

The protein belongs to the GcvP family. In terms of assembly, the glycine cleavage system is composed of four proteins: P, T, L and H. Pyridoxal 5'-phosphate is required as a cofactor.

The catalysed reaction is N(6)-[(R)-lipoyl]-L-lysyl-[glycine-cleavage complex H protein] + glycine + H(+) = N(6)-[(R)-S(8)-aminomethyldihydrolipoyl]-L-lysyl-[glycine-cleavage complex H protein] + CO2. The glycine cleavage system catalyzes the degradation of glycine. The P protein binds the alpha-amino group of glycine through its pyridoxal phosphate cofactor; CO(2) is released and the remaining methylamine moiety is then transferred to the lipoamide cofactor of the H protein. The chain is Glycine dehydrogenase (decarboxylating) from Cutibacterium acnes (strain DSM 16379 / KPA171202) (Propionibacterium acnes).